The following is a 237-amino-acid chain: Ribosomal RNA small subunit methyltransferase G (237 aa).

S-adenosyl-L-methionine-binding positions include G78, F83, A129–E130, and R148.

This sequence belongs to the methyltransferase superfamily. RNA methyltransferase RsmG family.

The protein localises to the cytoplasm. In terms of biological role, specifically methylates the N7 position of a guanine in 16S rRNA. The protein is Ribosomal RNA small subunit methyltransferase G of Streptococcus pyogenes serotype M1.